The following is a 199-amino-acid chain: Imidazole glycerol phosphate synthase subunit HisH (199 aa).

Residues Met-1–Leu-199 form the Glutamine amidotransferase type-1 domain. The active-site Nucleophile is Cys-79. Catalysis depends on residues His-180 and Glu-182.

In terms of assembly, heterodimer of HisH and HisF.

Its subcellular location is the cytoplasm. The catalysed reaction is 5-[(5-phospho-1-deoxy-D-ribulos-1-ylimino)methylamino]-1-(5-phospho-beta-D-ribosyl)imidazole-4-carboxamide + L-glutamine = D-erythro-1-(imidazol-4-yl)glycerol 3-phosphate + 5-amino-1-(5-phospho-beta-D-ribosyl)imidazole-4-carboxamide + L-glutamate + H(+). It catalyses the reaction L-glutamine + H2O = L-glutamate + NH4(+). It participates in amino-acid biosynthesis; L-histidine biosynthesis; L-histidine from 5-phospho-alpha-D-ribose 1-diphosphate: step 5/9. In terms of biological role, IGPS catalyzes the conversion of PRFAR and glutamine to IGP, AICAR and glutamate. The HisH subunit catalyzes the hydrolysis of glutamine to glutamate and ammonia as part of the synthesis of IGP and AICAR. The resulting ammonia molecule is channeled to the active site of HisF. The protein is Imidazole glycerol phosphate synthase subunit HisH of Carboxydothermus hydrogenoformans (strain ATCC BAA-161 / DSM 6008 / Z-2901).